A 194-amino-acid polypeptide reads, in one-letter code: Probable GTP-binding protein EngB (194 aa).

The region spanning 22-194 is the EngB-type G domain; that stretch reads PLPEVALAGR…AWKAILHAIS (173 aa). GTP contacts are provided by residues 30 to 37, 57 to 61, 75 to 78, 142 to 145, and 174 to 176; these read GRSNVGKS, GKTQT, DVPG, TKCD, and FSS. Serine 37 and threonine 59 together coordinate Mg(2+).

The protein belongs to the TRAFAC class TrmE-Era-EngA-EngB-Septin-like GTPase superfamily. EngB GTPase family. Mg(2+) serves as cofactor.

In terms of biological role, necessary for normal cell division and for the maintenance of normal septation. This Halalkalibacterium halodurans (strain ATCC BAA-125 / DSM 18197 / FERM 7344 / JCM 9153 / C-125) (Bacillus halodurans) protein is Probable GTP-binding protein EngB.